The following is a 377-amino-acid chain: uncharacterized protein (377 aa).

The segment at 345–377 (VGPSPPAYEQVARSSPTDIPLPPPSCPTNVQRD) is disordered.

This is an uncharacterized protein from Schizosaccharomyces pombe (strain 972 / ATCC 24843) (Fission yeast).